The sequence spans 94 residues: Co-chaperonin GroES (94 aa).

The protein belongs to the GroES chaperonin family. Heptamer of 7 subunits arranged in a ring. Interacts with the chaperonin GroEL.

Its subcellular location is the cytoplasm. Together with the chaperonin GroEL, plays an essential role in assisting protein folding. The GroEL-GroES system forms a nano-cage that allows encapsulation of the non-native substrate proteins and provides a physical environment optimized to promote and accelerate protein folding. GroES binds to the apical surface of the GroEL ring, thereby capping the opening of the GroEL channel. The sequence is that of Co-chaperonin GroES from Streptococcus equinus (Streptococcus bovis).